We begin with the raw amino-acid sequence, 472 residues long: Inhibitor of Apoptosis OPG037 (472 aa).

6 ANK repeats span residues 97-126 (DGNY…DPNA), 130-161 (HNKT…KINN), 233-263 (DGNT…DVNK), 267-297 (FGDS…VITD), 322-351 (YDST…ICED), and 353-377 (MYYA…SVDF).

Belongs to the orthopoxvirus OPG037 protein family. In terms of assembly, may interact with host caspase-9-Apaf-1 complex.

The protein localises to the host cytoplasm. Its function is as follows. Inhibits host apoptosis. Acts by associating with host apoptosome. In Vaccinia virus (strain Western Reserve) (VACV), this protein is Inhibitor of Apoptosis OPG037 (OPG037).